The primary structure comprises 736 residues: 1,4-alpha-glucan branching enzyme GlgB 2 (736 aa).

Residue aspartate 415 is the Nucleophile of the active site. The active-site Proton donor is glutamate 468.

The protein belongs to the glycosyl hydrolase 13 family. GlgB subfamily. In terms of assembly, monomer.

The catalysed reaction is Transfers a segment of a (1-&gt;4)-alpha-D-glucan chain to a primary hydroxy group in a similar glucan chain.. Its pathway is glycan biosynthesis; glycogen biosynthesis. Functionally, catalyzes the formation of the alpha-1,6-glucosidic linkages in glycogen by scission of a 1,4-alpha-linked oligosaccharide from growing alpha-1,4-glucan chains and the subsequent attachment of the oligosaccharide to the alpha-1,6 position. This Rhizobium johnstonii (strain DSM 114642 / LMG 32736 / 3841) (Rhizobium leguminosarum bv. viciae) protein is 1,4-alpha-glucan branching enzyme GlgB 2.